The following is a 93-amino-acid chain: Small ribosomal subunit protein uS19m (93 aa).

It belongs to the universal ribosomal protein uS19 family.

It is found in the mitochondrion. The protein is Small ribosomal subunit protein uS19m (RPS19) of Marchantia polymorpha (Common liverwort).